Consider the following 498-residue polypeptide: Probable malate:quinone oxidoreductase 2 (498 aa).

Belongs to the MQO family. FAD serves as cofactor.

The enzyme catalyses (S)-malate + a quinone = a quinol + oxaloacetate. It functions in the pathway carbohydrate metabolism; tricarboxylic acid cycle; oxaloacetate from (S)-malate (quinone route): step 1/1. The protein is Probable malate:quinone oxidoreductase 2 of Staphylococcus aureus (strain COL).